The chain runs to 238 residues: LDCTVIDGNLKQIDAGSGSVVGVNNLNETFVLIDNVFTKISGSLKHFSVGPAGQLGVNTANNIFKYQSGGFVQLAGLLKQVDAGGDQIIAGVNMYDDIYCLNMDANNKWPSSNTPWVQINGKLKYYSCGPYSCWGVNSNDQIFIMKDVSSNVCSGSGSFINIPGLLSMIEVATDGSVFGVNSQGNLYQRTGVTRSKPDGTDWISMVACPNGHKHVSFDLGVLWLVCVDGSIRKCILTD.

Tandem repeats lie at residues 1 to 34 (LDCT…VLID), 35 to 68 (NVFT…KYQS), 69 to 106 (GGFV…MDAN), 107 to 156 (NKWP…CSGS), and 157 to 199 (GSFI…KPDG). Positions 1–199 (LDCTVIDGNL…TGVTRSKPDG (199 aa)) are 5 X approximate tandem repeats. 4 cysteine pairs are disulfide-bonded: Cys3–Cys234, Cys100–Cys153, Cys128–Cys133, and Cys208–Cys226. A glycan (N-linked (GlcNAc...) asparagine) is linked at Asn27.

Belongs to the tectonin family. Expressed in the eggs.

It is found in the secreted. Its function is as follows. Lipopolysaccharide-binding protein with a very low agglutinating activity for human A-type erythrocytes and interacts with both Gram-positive and Gram-negative bacteria. The sequence is that of Fish-egg lectin from Cyprinus carpio (Common carp).